Consider the following 570-residue polypeptide: Molecular chaperone MKKS (570 aa).

192–199 (GHIILGKS) contacts ATP. The interval 198–370 (KSLIVPLKGQ…FHLIPNEATI (173 aa)) is substrate-binding apical domain.

It belongs to the TCP-1 chaperonin family. As to quaternary structure, component of a complex composed at least of MKKS, BBS10, BBS12, TCP1, CCT2, CCT3, CCT4, CCT5 and CCT8. Interacts with STUB1. Interacts with BBS2 (via coiled coil domain). Interacts with CCDC28B. Interacts with BBS12. Interacts with SMARCC1, a component of the SWI/SNF complexes; the interaction takes place predominantly in the cytoplasm and may modulate SMARCC1 location. Interacts with DLEC1. Widely expressed in adult and fetal tissues.

The protein resides in the cytoplasm. Its subcellular location is the cytoskeleton. The protein localises to the microtubule organizing center. It is found in the centrosome. It localises to the cytosol. The protein resides in the nucleus. Functionally, probable molecular chaperone that assists the folding of proteins upon ATP hydrolysis. Plays a role in the assembly of BBSome, a complex involved in ciliogenesis regulating transports vesicles to the cilia. May play a role in protein processing in limb, cardiac and reproductive system development. May play a role in cytokinesis. The sequence is that of Molecular chaperone MKKS from Homo sapiens (Human).